The following is a 329-amino-acid chain: T-lymphocyte activation antigen CD86 (329 aa).

Positions 1–23 (MDPQCTMGLSNILFVMAFLLSGA) are cleaved as a signal peptide. Topologically, residues 24-247 (APLKIQAYFN…DPQPPPDHIP (224 aa)) are extracellular. Asparagine 33, asparagine 47, asparagine 135, asparagine 146, asparagine 154, asparagine 177, asparagine 192, and asparagine 213 each carry an N-linked (GlcNAc...) asparagine glycan. One can recognise an Ig-like V-type domain in the interval 33 to 131 (NETADLPCQF…RIHQMNSELS (99 aa)). An intrachain disulfide couples cysteine 40 to cysteine 110. An Ig-like C2-type domain is found at 150 to 225 (NVYINLTCSS…IFCILETDKT (76 aa)). Cysteine 157 and cysteine 218 are disulfide-bonded. Residues 248-268 (WITAVLPTVIICVMVFCLILW) form a helical membrane-spanning segment. The Cytoplasmic portion of the chain corresponds to 269 to 329 (KWKKKKRPRN…SSCDKSDTCF (61 aa)). A disordered region spans residues 277 to 329 (RNSYKCGTNTMEREESEQTKKREKIHIPERSDEAQRVFKSSKTSSCDKSDTCF). The span at 287-312 (MEREESEQTKKREKIHIPERSDEAQR) shows a compositional bias: basic and acidic residues.

Homodimer. Interacts with MARCH8. Interacts (via cytoplasmic domain) with PHB1 and PHB2; the interactions increases after priming with CD40. Interacts with CD28. As to quaternary structure, (Microbial infection) Interacts with adenovirus subgroup b fiber protein. In terms of assembly, (Microbial infection) Interacts with Orthopoxvirus OPG038/M2 protein, inhibiting the interaction with CTLA4 and CD28. In terms of processing, polyubiquitinated; which is promoted by MARCH8 and results in endocytosis and lysosomal degradation. In terms of tissue distribution, expressed by activated B-lymphocytes and monocytes.

The protein resides in the cell membrane. Receptor involved in the costimulatory signal essential for T-lymphocyte proliferation and interleukin-2 production, by binding CD28 or CTLA-4. May play a critical role in the early events of T-cell activation and costimulation of naive T-cells, such as deciding between immunity and anergy that is made by T-cells within 24 hours after activation. Also involved in the regulation of B cells function, plays a role in regulating the level of IgG(1) produced. Upon CD40 engagement, activates NF-kappa-B signaling pathway via phospholipase C and protein kinase C activation. In terms of biological role, interferes with the formation of CD86 clusters, and thus acts as a negative regulator of T-cell activation. Its function is as follows. (Microbial infection) Acts as a receptor for adenovirus subgroup B. The chain is T-lymphocyte activation antigen CD86 (CD86) from Homo sapiens (Human).